We begin with the raw amino-acid sequence, 615 residues long: UvrABC system protein C (615 aa).

One can recognise a GIY-YIG domain in the interval 14-91 (TSPGCYIHKD…IKENKPKYNI (78 aa)). One can recognise a UVR domain in the interval 196–231 (NKIIDELKGKMAAAAQTMEFERAAEYRDLIQAIGTL).

Belongs to the UvrC family. Interacts with UvrB in an incision complex.

It is found in the cytoplasm. Its function is as follows. The UvrABC repair system catalyzes the recognition and processing of DNA lesions. UvrC both incises the 5' and 3' sides of the lesion. The N-terminal half is responsible for the 3' incision and the C-terminal half is responsible for the 5' incision. The chain is UvrABC system protein C from Streptococcus pneumoniae serotype 19F (strain G54).